A 195-amino-acid chain; its full sequence is Imidazoleglycerol-phosphate dehydratase (195 aa).

This sequence belongs to the imidazoleglycerol-phosphate dehydratase family.

The protein localises to the cytoplasm. The enzyme catalyses D-erythro-1-(imidazol-4-yl)glycerol 3-phosphate = 3-(imidazol-4-yl)-2-oxopropyl phosphate + H2O. The protein operates within amino-acid biosynthesis; L-histidine biosynthesis; L-histidine from 5-phospho-alpha-D-ribose 1-diphosphate: step 6/9. This chain is Imidazoleglycerol-phosphate dehydratase, found in Dinoroseobacter shibae (strain DSM 16493 / NCIMB 14021 / DFL 12).